The following is a 305-amino-acid chain: Type II restriction enzyme SsoII (305 aa).

The enzyme catalyses Endonucleolytic cleavage of DNA to give specific double-stranded fragments with terminal 5'-phosphates.. In terms of biological role, a P subtype restriction enzyme that recognizes the double-stranded sequence 5'-CCNGG-3' and cleaves before C-1. This is Type II restriction enzyme SsoII (ssoIIR) from Shigella sonnei.